The following is a 422-amino-acid chain: Enolase (422 aa).

Residue Gln-162 coordinates (2R)-2-phosphoglycerate. The active-site Proton donor is Glu-204. Mg(2+)-binding residues include Asp-241, Glu-284, and Asp-311. 4 residues coordinate (2R)-2-phosphoglycerate: Lys-336, Arg-365, Ser-366, and Lys-387. Lys-336 (proton acceptor) is an active-site residue.

It belongs to the enolase family. As to quaternary structure, component of the RNA degradosome, a multiprotein complex involved in RNA processing and mRNA degradation. It depends on Mg(2+) as a cofactor.

It is found in the cytoplasm. It localises to the secreted. The protein resides in the cell surface. The catalysed reaction is (2R)-2-phosphoglycerate = phosphoenolpyruvate + H2O. It participates in carbohydrate degradation; glycolysis; pyruvate from D-glyceraldehyde 3-phosphate: step 4/5. Its function is as follows. Catalyzes the reversible conversion of 2-phosphoglycerate (2-PG) into phosphoenolpyruvate (PEP). It is essential for the degradation of carbohydrates via glycolysis. This Legionella pneumophila (strain Paris) protein is Enolase.